Reading from the N-terminus, the 637-residue chain is Chaperone protein HtpG (637 aa).

An a; substrate-binding region spans residues 1 to 345; sequence MSQQETHGFQ…SNDLPLNVSR (345 aa). The b stretch occupies residues 346–562; sequence EILQDNHITK…EGEMSSQMIK (217 aa). The interval 563–637 is c; the sequence is LMQAAGQPVP…MNQMLLANLK (75 aa).

It belongs to the heat shock protein 90 family. Homodimer.

Its subcellular location is the cytoplasm. Molecular chaperone. Has ATPase activity. In Shewanella sp. (strain MR-7), this protein is Chaperone protein HtpG.